A 406-amino-acid polypeptide reads, in one-letter code: MLYPRNLALFSLLSLSSAAPSQVERSPDAVLKPRAVCTPTAGGSPSIDDVPAIRKAIASCGNGGTIVFPAGSTYYLNSVLDLAGCSNCDIQVEGVLKFSGSTEYWGGKTAMLNIDMINGLRLRSLTGSGVIDGNGQNAYDRFASDKNYKRPTLLYITGGSNIEVSGLRQKNPPNVFNSVKGDTQHVTFKNLRMDATSNSQNPPKNTDGFDIGASTHVTISSVSVTNDDDCVAFKPGSNYVTVEDVTCTGSHGISVGSLGKSGTDVVQNILAHRINMIESTKAAGIKTYPSGNGHGLSTVKNVTFSDFNVRGCDYAFQIESCYGESESYCESNPGNAILQGIVVKGFSGTTSGKYDPVVANLNCGARGTCDVSMSAFSVKAPSGKATVLCDNTPSSLGVSCTSGASG.

An N-terminal signal peptide occupies residues 1–18; that stretch reads MLYPRNLALFSLLSLSSA. PbH1 repeat units follow at residues 183–213, 214–235, 237–257, and 299–320; these read TQHV…DIGA, STHV…AFKP, SNYV…SVGS, and VKNV…QIES. The active-site Proton donor is the D228. H251 is a catalytic residue. N301 carries an N-linked (GlcNAc...) asparagine glycan.

It belongs to the glycosyl hydrolase 28 family.

It localises to the secreted. Its function is as follows. Pectinolytic enzyme involved in the degradation of xylogalacturonan (xga), a galacturonan backbone heavily substituted with xylose, and which is one important component of the hairy regions of pectin. Activity requires a galacturonic acid backbone substituted with xylose. The chain is Probable endo-xylogalacturonan hydrolase A (xghA) from Aspergillus fumigatus (strain CBS 144.89 / FGSC A1163 / CEA10) (Neosartorya fumigata).